The following is a 197-amino-acid chain: UPF0462 protein C4orf33 homolog (197 aa).

The protein belongs to the UPF0462 family.

This chain is UPF0462 protein C4orf33 homolog, found in Danio rerio (Zebrafish).